The primary structure comprises 332 residues: Formamidase (332 aa).

The CN hydrolase domain maps to 14-259 (FLTALIQYPV…WEIVTAEVYP (246 aa)). Glu60 (proton acceptor) is an active-site residue. Catalysis depends on Lys132, which acts as the Proton donor. The Nucleophile role is filled by Cys165.

This sequence belongs to the carbon-nitrogen hydrolase superfamily. Aliphatic amidase family.

It catalyses the reaction formamide + H2O = formate + NH4(+). In terms of biological role, is an aliphatic amidase with a restricted substrate specificity, as it only hydrolyzes formamide. The protein is Formamidase of Bacillus cereus (strain B4264).